Consider the following 250-residue polypeptide: Anamorsin homolog 2 (250 aa).

Residues 1-102 (MNLKITINQQ…QTKKINIPQQ (102 aa)) form an N-terminal SAM-like domain region. Positions 102-149 (QDFNNCYGKYDYIEQKFQNQINFFKQVDLKGNQETIDENELLNDGVEV) are linker. Positions 155, 162, 165, and 167 each coordinate [2Fe-2S] cluster. The fe-S binding site A stretch occupies residues 155–167 (CASKPRACANCTC). Residues cysteine 193, cysteine 196, cysteine 204, and cysteine 207 each contribute to the [4Fe-4S] cluster site. 2 short sequence motifs (cx2C motif) span residues 193-196 (CGSC) and 204-207 (CANC). Residues 193 to 207 (CGSCYLGDAFRCANC) form a fe-S binding site B region.

This sequence belongs to the anamorsin family. As to quaternary structure, monomer. [2Fe-2S] cluster serves as cofactor. [4Fe-4S] cluster is required as a cofactor.

The protein localises to the cytoplasm. It localises to the mitochondrion intermembrane space. In terms of biological role, component of the cytosolic iron-sulfur (Fe-S) protein assembly (CIA) machinery. Required for the maturation of extramitochondrial Fe-S proteins. Part of an electron transfer chain functioning in an early step of cytosolic Fe-S biogenesis, facilitating the de novo assembly of a [4Fe-4S] cluster on the cytosolic Fe-S scaffold complex. Electrons are transferred from NADPH via a FAD- and FMN-containing diflavin oxidoreductase. Together with the diflavin oxidoreductase, also required for the assembly of the diferric tyrosyl radical cofactor of ribonucleotide reductase (RNR), probably by providing electrons for reduction during radical cofactor maturation in the catalytic small subunit. The chain is Anamorsin homolog 2 from Paramecium tetraurelia.